We begin with the raw amino-acid sequence, 364 residues long: Photoreceptor outer segment membrane glycoprotein 2 (364 aa).

Over 1-24 the chain is Cytoplasmic; that stretch reads MTVLKVKFTKTKRDKLAQILWILN. A helical membrane pass occupies residues 25-43; it reads WVSVVSGIILFSLGLFLKI. The Lumenal portion of the chain corresponds to 44-61; the sequence is EIKKRNEVMAKGDINSVP. Residues 62–80 traverse the membrane as a helical segment; sequence NMLISVGVIACVVNFLGGK. At 81 to 99 the chain is on the cytoplasmic side; the sequence is ICYDCSDANKFSRWKLIML. A helical membrane pass occupies residues 100-123; it reads PYIICTFCFTFCILLGALMCYTMR. Residues 124-264 lie on the Lumenal side of the membrane; it reads NELEESLYLG…LEYYTAIMRS (141 aa). The N-linked (GlcNAc...) asparagine glycan is linked to asparagine 229. The helical transmembrane segment at 265-290 threads the bilayer; sequence IGIAALLIWLFELSVLIGVRYLQTAM. Residues 291–364 lie on the Cytoplasmic side of the membrane; that stretch reads KNVLLQGDLQ…VTAKSIPAAS (74 aa).

Belongs to the PRPH2/ROM1 family.

Its subcellular location is the membrane. This is Photoreceptor outer segment membrane glycoprotein 2 from Gallus gallus (Chicken).